Reading from the N-terminus, the 414-residue chain is uncharacterized protein (414 aa).

The interval 204–230 (LVGTPAPGPNGSNSDGDSERASQDVRD) is disordered. Basic and acidic residues predominate over residues 220–230 (DSERASQDVRD).

It belongs to the CdaR family.

This is an uncharacterized protein from Mycobacterium tuberculosis (strain CDC 1551 / Oshkosh).